Consider the following 711-residue polypeptide: DNA topoisomerase 3 (711 aa).

A Toprim domain is found at 2 to 135 (KSLILAEKPS…IRRLWISSVT (134 aa)). Positions 8 and 104 each coordinate Mg(2+). A Topo IA-type catalytic domain is found at 152-580 (YNDLYYAALA…EMKDFTKDVV (429 aa)). Residues 186–191 (SLGRVQ) form an interaction with DNA region. The active-site O-(5'-phospho-DNA)-tyrosine intermediate is Y305. The interval 691 to 711 (MNKNEGLDNNPFKDALKNLNL) is disordered.

This sequence belongs to the type IA topoisomerase family. Mg(2+) is required as a cofactor.

The catalysed reaction is ATP-independent breakage of single-stranded DNA, followed by passage and rejoining.. Functionally, releases the supercoiling and torsional tension of DNA, which is introduced during the DNA replication and transcription, by transiently cleaving and rejoining one strand of the DNA duplex. Introduces a single-strand break via transesterification at a target site in duplex DNA. The scissile phosphodiester is attacked by the catalytic tyrosine of the enzyme, resulting in the formation of a DNA-(5'-phosphotyrosyl)-enzyme intermediate and the expulsion of a 3'-OH DNA strand. The free DNA strand then undergoes passage around the unbroken strand, thus removing DNA supercoils. Finally, in the religation step, the DNA 3'-OH attacks the covalent intermediate to expel the active-site tyrosine and restore the DNA phosphodiester backbone. The chain is DNA topoisomerase 3 from Staphylococcus aureus (strain NCTC 8325 / PS 47).